The sequence spans 55 residues: Large ribosomal subunit protein bL33 (55 aa).

The protein belongs to the bacterial ribosomal protein bL33 family.

The sequence is that of Large ribosomal subunit protein bL33 from Paramagnetospirillum magneticum (strain ATCC 700264 / AMB-1) (Magnetospirillum magneticum).